Reading from the N-terminus, the 393-residue chain is MTAPTTRKDLMIVNMGPQHPSMHGVLRLIVTLDGEDVVDCEPILGYLHRGMEKIAENRTIIQYLPYVTRWDYLATMFTEAITINGPEQLGNIQVPKRASYIRVIMLELSRIASHLLWLGPFMADIGAQTPFFYIFRERELIYDLFEAATGMRMMHNYFRIGGVAADLPYGWIDKCLDFCDYFLTGVAEYQKLITRNPIFLERVEGVGIIGRDEALNWGLSGPMLRASGIEWDLRKVDHYESYDEFDWQVQWQREGDSLARYLVRIGEMTESIKIIQQALEGIPGGPYENLEMRRFDRLKDPEWNDFEYRFISKKPSPTFELSKQELYVRVEAPKGELGIFLIGDQSVFPWRWKIRPPGFINLQILPQLVKRMKLADIMTILGSIDIIMGEVDR.

The protein belongs to the complex I 49 kDa subunit family. NDH is composed of at least 16 different subunits, 5 of which are encoded in the nucleus.

The protein resides in the plastid. It is found in the chloroplast thylakoid membrane. The enzyme catalyses a plastoquinone + NADH + (n+1) H(+)(in) = a plastoquinol + NAD(+) + n H(+)(out). The catalysed reaction is a plastoquinone + NADPH + (n+1) H(+)(in) = a plastoquinol + NADP(+) + n H(+)(out). In terms of biological role, NDH shuttles electrons from NAD(P)H:plastoquinone, via FMN and iron-sulfur (Fe-S) centers, to quinones in the photosynthetic chain and possibly in a chloroplast respiratory chain. The immediate electron acceptor for the enzyme in this species is believed to be plastoquinone. Couples the redox reaction to proton translocation, and thus conserves the redox energy in a proton gradient. The protein is NAD(P)H-quinone oxidoreductase subunit H, chloroplastic of Solanum lycopersicum (Tomato).